The chain runs to 138 residues: Large ribosomal subunit protein uL16 (138 aa).

Basic residues predominate over residues 1-19 (MLIPKRVKYRRQHRPHRSG). The segment at 1–24 (MLIPKRVKYRRQHRPHRSGVSKGG) is disordered.

The protein belongs to the universal ribosomal protein uL16 family. In terms of assembly, part of the 50S ribosomal subunit.

In terms of biological role, binds 23S rRNA and is also seen to make contacts with the A and possibly P site tRNAs. The polypeptide is Large ribosomal subunit protein uL16 (Corynebacterium diphtheriae (strain ATCC 700971 / NCTC 13129 / Biotype gravis)).